A 170-amino-acid polypeptide reads, in one-letter code: ATP synthase subunit b (170 aa).

Residues 30–50 (FFFVLAIFLVVLAVIGTFVVP) traverse the membrane as a helical segment.

It belongs to the ATPase B chain family. As to quaternary structure, F-type ATPases have 2 components, F(1) - the catalytic core - and F(0) - the membrane proton channel. F(1) has five subunits: alpha(3), beta(3), gamma(1), delta(1), epsilon(1). F(0) has three main subunits: a(1), b(2) and c(10-14). The alpha and beta chains form an alternating ring which encloses part of the gamma chain. F(1) is attached to F(0) by a central stalk formed by the gamma and epsilon chains, while a peripheral stalk is formed by the delta and b chains.

The protein resides in the cell membrane. Functionally, f(1)F(0) ATP synthase produces ATP from ADP in the presence of a proton or sodium gradient. F-type ATPases consist of two structural domains, F(1) containing the extramembraneous catalytic core and F(0) containing the membrane proton channel, linked together by a central stalk and a peripheral stalk. During catalysis, ATP synthesis in the catalytic domain of F(1) is coupled via a rotary mechanism of the central stalk subunits to proton translocation. Component of the F(0) channel, it forms part of the peripheral stalk, linking F(1) to F(0). The protein is ATP synthase subunit b of Mycobacterium marinum (strain ATCC BAA-535 / M).